The chain runs to 116 residues: Cystatin (116 aa).

The Secondary area of contact motif lies at 53 to 57; the sequence is QLVSG. 2 disulfide bridges follow: cysteine 71/cysteine 81 and cysteine 95/cysteine 115. Residue serine 80 is modified to Phosphoserine.

The protein belongs to the cystatin family.

It localises to the secreted. Functionally, this protein binds tightly to and inhibits papain and cathepsin B. This is Cystatin from Coturnix japonica (Japanese quail).